A 273-amino-acid polypeptide reads, in one-letter code: Rhamnulose-1-phosphate aldolase (273 aa).

Glu-117 is an active-site residue. The Zn(2+) site is built by His-140, His-142, and His-211.

It belongs to the aldolase class II family. RhaD subfamily. Zn(2+) is required as a cofactor.

The protein localises to the cytoplasm. It catalyses the reaction L-rhamnulose 1-phosphate = (S)-lactaldehyde + dihydroxyacetone phosphate. It participates in carbohydrate degradation; L-rhamnose degradation; glycerone phosphate from L-rhamnose: step 3/3. Its function is as follows. Catalyzes the reversible cleavage of L-rhamnulose-1-phosphate to dihydroxyacetone phosphate (DHAP) and L-lactaldehyde. This chain is Rhamnulose-1-phosphate aldolase, found in Listeria innocua serovar 6a (strain ATCC BAA-680 / CLIP 11262).